A 463-amino-acid chain; its full sequence is Bifunctional protein GlmU (463 aa).

The pyrophosphorylase stretch occupies residues 1–228 (MEQALSIVVL…PAEVQGVNDR (228 aa)). UDP-N-acetyl-alpha-D-glucosamine contacts are provided by residues 10–13 (LAAG), Lys24, Gln75, 80–81 (GT), 102–104 (YGD), Gly138, Glu153, Asn168, and Asn226. Residue Asp104 coordinates Mg(2+). Asn226 serves as a coordination point for Mg(2+). Positions 229 to 249 (VQLAAAERVWQRRQAEDWMRA) are linker. Residues 250–463 (GVTILDPDRF…RPDRGEGSDA (214 aa)) are N-acetyltransferase. UDP-N-acetyl-alpha-D-glucosamine-binding residues include Arg332 and Lys350. The active-site Proton acceptor is the His362. UDP-N-acetyl-alpha-D-glucosamine is bound by residues Tyr365 and Asn376. Residues Ala379, 385–386 (NY), Ser404, Ala422, and Arg439 contribute to the acetyl-CoA site. The tract at residues 437 to 463 (VARSAQRSIHGWRRPGQRPDRGEGSDA) is disordered. Positions 453-463 (QRPDRGEGSDA) are enriched in basic and acidic residues.

This sequence in the N-terminal section; belongs to the N-acetylglucosamine-1-phosphate uridyltransferase family. In the C-terminal section; belongs to the transferase hexapeptide repeat family. As to quaternary structure, homotrimer. Mg(2+) serves as cofactor.

The protein resides in the cytoplasm. The catalysed reaction is alpha-D-glucosamine 1-phosphate + acetyl-CoA = N-acetyl-alpha-D-glucosamine 1-phosphate + CoA + H(+). It catalyses the reaction N-acetyl-alpha-D-glucosamine 1-phosphate + UTP + H(+) = UDP-N-acetyl-alpha-D-glucosamine + diphosphate. The protein operates within nucleotide-sugar biosynthesis; UDP-N-acetyl-alpha-D-glucosamine biosynthesis; N-acetyl-alpha-D-glucosamine 1-phosphate from alpha-D-glucosamine 6-phosphate (route II): step 2/2. Its pathway is nucleotide-sugar biosynthesis; UDP-N-acetyl-alpha-D-glucosamine biosynthesis; UDP-N-acetyl-alpha-D-glucosamine from N-acetyl-alpha-D-glucosamine 1-phosphate: step 1/1. It functions in the pathway bacterial outer membrane biogenesis; LPS lipid A biosynthesis. Its function is as follows. Catalyzes the last two sequential reactions in the de novo biosynthetic pathway for UDP-N-acetylglucosamine (UDP-GlcNAc). The C-terminal domain catalyzes the transfer of acetyl group from acetyl coenzyme A to glucosamine-1-phosphate (GlcN-1-P) to produce N-acetylglucosamine-1-phosphate (GlcNAc-1-P), which is converted into UDP-GlcNAc by the transfer of uridine 5-monophosphate (from uridine 5-triphosphate), a reaction catalyzed by the N-terminal domain. This is Bifunctional protein GlmU from Alkalilimnicola ehrlichii (strain ATCC BAA-1101 / DSM 17681 / MLHE-1).